The sequence spans 69 residues: Snake venom metalloproteinase BnP2 (69 aa).

The Peptidase M12B domain maps to 1–69 (YIELAVVADH…EWRERDIIPR (69 aa)). Glu3 is a Ca(2+) binding site.

The protein belongs to the venom metalloproteinase (M12B) family. P-I subfamily. Monomer. Zn(2+) is required as a cofactor. In terms of tissue distribution, expressed by the venom gland.

The protein localises to the secreted. Its activity is regulated as follows. Inhibited by EDTA. In terms of biological role, this protein is a zinc protease from snake venom that is devoid of significant myotoxic and hemorrhagic activities. It hydrolyzes the Aalpha-chain and more slowly the Bbeta-chain of fibrin and fibrinogen, without affecting the gamma-chains. It induces cell detachment and a apoptosis (anoikis) in endothelial cells. The protein is Snake venom metalloproteinase BnP2 of Bothrops pauloensis (Neuwied's lancehead).